The chain runs to 200 residues: Prolactin (200 aa).

3 disulfides stabilise this stretch: cysteine 4–cysteine 11, cysteine 59–cysteine 175, and cysteine 192–cysteine 200.

Belongs to the somatotropin/prolactin family. In terms of tissue distribution, pituitary gland.

The protein localises to the secreted. In Protopterus aethiopicus (Marbled lungfish), this protein is Prolactin (prl).